We begin with the raw amino-acid sequence, 366 residues long: 3-dehydroquinate synthase (366 aa).

NAD(+) contacts are provided by residues 69–74 (DGEAFK), 103–107 (GVIGD), 127–128 (TT), Lys-140, and Lys-149. Positions 182, 245, and 262 each coordinate Zn(2+).

It belongs to the sugar phosphate cyclases superfamily. Dehydroquinate synthase family. The cofactor is Co(2+). Requires Zn(2+) as cofactor. NAD(+) is required as a cofactor.

It is found in the cytoplasm. The catalysed reaction is 7-phospho-2-dehydro-3-deoxy-D-arabino-heptonate = 3-dehydroquinate + phosphate. It participates in metabolic intermediate biosynthesis; chorismate biosynthesis; chorismate from D-erythrose 4-phosphate and phosphoenolpyruvate: step 2/7. In terms of biological role, catalyzes the conversion of 3-deoxy-D-arabino-heptulosonate 7-phosphate (DAHP) to dehydroquinate (DHQ). The polypeptide is 3-dehydroquinate synthase (Pseudomonas fluorescens (strain Pf0-1)).